We begin with the raw amino-acid sequence, 273 residues long: MQSRRFHRLSRFRKNKRLLRERLRQRIFFRDRVVPEMMENPRVLVLTGAGISAESGIRTFRAADGLWEEHRVEDVATPEGFARNPGLVQTFYNARRQQLQQPEIQPNAAHLALAKLEEALGDRFLLVTQNIDNLHERAGNRNIIHMHGELLKVRCSQSGQILEWNGDVMPEDKCHCCQFPAPLRPHVVWFGEMPLGMDEIYMALSMADIFIAIGTSGHVYPAAGFVHEAKLHGAHTVELNLEPSQVGSEFEEKHYGPASQVVPEFVDKFLKGL.

Positions 20-272 constitute a Deacetylase sirtuin-type domain; that stretch reads RERLRQRIFF…PEFVDKFLKG (253 aa). 48–67 is a binding site for NAD(+); that stretch reads GAGISAESGIRTFRAADGLW. Positions 92 and 95 each coordinate substrate. 129–132 serves as a coordination point for NAD(+); the sequence is QNID. Histidine 147 acts as the Proton acceptor in catalysis. 2 residues coordinate Zn(2+): cysteine 155 and cysteine 174. NAD(+) is bound by residues 214–216, 240–242, and alanine 258; these read GTS and NLE.

This sequence belongs to the sirtuin family. Class III subfamily. It depends on Zn(2+) as a cofactor.

It is found in the cytoplasm. The catalysed reaction is N(6)-acetyl-L-lysyl-[protein] + NAD(+) + H2O = 2''-O-acetyl-ADP-D-ribose + nicotinamide + L-lysyl-[protein]. It catalyses the reaction N(6)-succinyl-L-lysyl-[protein] + NAD(+) + H2O = 2''-O-succinyl-ADP-D-ribose + nicotinamide + L-lysyl-[protein]. It carries out the reaction N(6)-(2-hydroxyisobutanoyl)-L-lysyl-[protein] + NAD(+) + H2O = 2''-O-(2-hydroxyisobutanoyl)-ADP-D-ribose + nicotinamide + L-lysyl-[protein]. NAD-dependent lysine deacetylase that specifically removes acetyl groups on target proteins. Also acts as a protein-lysine deacylase by mediating protein desuccinylation and de-2-hydroxyisobutyrylation. Modulates the activities of several proteins which are inactive in their acylated form. This Salmonella typhi protein is NAD-dependent protein deacylase.